A 440-amino-acid chain; its full sequence is Transposon Ty1-PR2 Gag polyprotein (440 aa).

3 stretches are compositionally biased toward polar residues: residues 1–10, 48–60, and 127–152; these read MESQQLSNYP, TKAN…TPAS, and QSQF…GNTF. 3 disordered regions span residues 1–93, 126–173, and 352–440; these read MESQ…MMTQ, PQSQ…RPPP, and GSRN…PETY. Positions 153-165 are enriched in low complexity; that stretch reads TDSSSADSDMTST. Residues 299–401 form an RNA-binding region; the sequence is NNGIHINNKV…NSKSKTARAH (103 aa). Positions 402 to 418 are enriched in low complexity; that stretch reads NVSTSNNSPSTDNDSIS. Ser416 carries the phosphoserine modification. Polar residues predominate over residues 419-428; that stretch reads KSTTEPIQLN. A compositionally biased stretch (basic and acidic residues) spans 429-440; it reads NKHDLHLRPETY.

As to quaternary structure, homotrimer.

The protein resides in the cytoplasm. Its function is as follows. Capsid protein (CA) is the structural component of the virus-like particle (VLP), forming the shell that encapsulates the retrotransposons dimeric RNA genome. The particles are assembled from trimer-clustered units and there are holes in the capsid shells that allow for the diffusion of macromolecules. CA also has nucleocapsid-like chaperone activity, promoting primer tRNA(i)-Met annealing to the multipartite primer-binding site (PBS), dimerization of Ty1 RNA and initiation of reverse transcription. The sequence is that of Transposon Ty1-PR2 Gag polyprotein (TY1A-PR2) from Saccharomyces cerevisiae (strain ATCC 204508 / S288c) (Baker's yeast).